Consider the following 106-residue polypeptide: Iron-sulfur cluster assembly protein CyaY (106 aa).

Belongs to the frataxin family.

Involved in iron-sulfur (Fe-S) cluster assembly. May act as a regulator of Fe-S biogenesis. In Pectobacterium atrosepticum (strain SCRI 1043 / ATCC BAA-672) (Erwinia carotovora subsp. atroseptica), this protein is Iron-sulfur cluster assembly protein CyaY.